The following is a 287-amino-acid chain: Acetyl-coenzyme A carboxylase carboxyl transferase subunit beta (287 aa).

A CoA carboxyltransferase N-terminal domain is found at Leu33–Ala287. Zn(2+) is bound by residues Cys37, Cys40, Cys55, and Cys58. The C4-type zinc-finger motif lies at Cys37–Cys58.

It belongs to the AccD/PCCB family. Acetyl-CoA carboxylase is a heterohexamer composed of biotin carboxyl carrier protein (AccB), biotin carboxylase (AccC) and two subunits each of ACCase subunit alpha (AccA) and ACCase subunit beta (AccD). Zn(2+) serves as cofactor.

It localises to the cytoplasm. It catalyses the reaction N(6)-carboxybiotinyl-L-lysyl-[protein] + acetyl-CoA = N(6)-biotinyl-L-lysyl-[protein] + malonyl-CoA. It functions in the pathway lipid metabolism; malonyl-CoA biosynthesis; malonyl-CoA from acetyl-CoA: step 1/1. In terms of biological role, component of the acetyl coenzyme A carboxylase (ACC) complex. Biotin carboxylase (BC) catalyzes the carboxylation of biotin on its carrier protein (BCCP) and then the CO(2) group is transferred by the transcarboxylase to acetyl-CoA to form malonyl-CoA. This Streptococcus sanguinis (strain SK36) protein is Acetyl-coenzyme A carboxylase carboxyl transferase subunit beta.